The chain runs to 343 residues: Anthranilate phosphoribosyltransferase (343 aa).

5-phospho-alpha-D-ribose 1-diphosphate contacts are provided by residues Gly-86, Gly-89–Asp-90, Thr-94, Asn-96–Thr-99, Lys-114–Gly-122, and Ser-126. An anthranilate-binding site is contributed by Gly-86. Residue Ser-98 coordinates Mg(2+). Position 117 (Asn-117) interacts with anthranilate. Position 172 (Arg-172) interacts with anthranilate. Mg(2+) is bound by residues Asp-231 and Glu-232.

Belongs to the anthranilate phosphoribosyltransferase family. As to quaternary structure, homodimer. The cofactor is Mg(2+).

It catalyses the reaction N-(5-phospho-beta-D-ribosyl)anthranilate + diphosphate = 5-phospho-alpha-D-ribose 1-diphosphate + anthranilate. Its pathway is amino-acid biosynthesis; L-tryptophan biosynthesis; L-tryptophan from chorismate: step 2/5. Its function is as follows. Catalyzes the transfer of the phosphoribosyl group of 5-phosphorylribose-1-pyrophosphate (PRPP) to anthranilate to yield N-(5'-phosphoribosyl)-anthranilate (PRA). This is Anthranilate phosphoribosyltransferase from Synechococcus sp. (strain JA-3-3Ab) (Cyanobacteria bacterium Yellowstone A-Prime).